A 469-amino-acid polypeptide reads, in one-letter code: Origin recognition complex subunit 6 (469 aa).

Composition is skewed to low complexity over residues 218 to 234 (SSTLNNTTTSTTTTAPK) and 275 to 308 (ATPTLSSSSSSSSSSSSSLSPPLSSNPTTDLSST). Disordered regions lie at residues 218–241 (SSTLNNTTTSTTTTAPKSPIPIPS), 275–309 (ATPTLSSSSSSSSSSSSSLSPPLSSNPTTDLSSTN), 356–423 (ESPF…EGDL), and 436–469 (KEQQFNDWKNSDFAKSKPTPVNATKQLTLDSFFK). Composition is skewed to basic and acidic residues over residues 380–390 (SRDELEKESEL) and 409–423 (QKEKSVKNKINEGDL). Positions 454–469 (TPVNATKQLTLDSFFK) are enriched in polar residues.

This sequence belongs to the ORC6 family. As to quaternary structure, ORC is composed of six subunits.

The protein resides in the nucleus. Functionally, component of the origin recognition complex (ORC) that binds origins of replication. DNA-binding is ATP-dependent, however specific DNA sequences that define origins of replication have not been identified so far. ORC is required to assemble the pre-replication complex necessary to initiate DNA replication. This is Origin recognition complex subunit 6 (orcF) from Dictyostelium discoideum (Social amoeba).